We begin with the raw amino-acid sequence, 497 residues long: Malonate-semialdehyde dehydrogenase (497 aa).

Phe-148, Lys-172, Glu-175, Arg-176, and Ser-225 together coordinate NAD(+). The active-site Nucleophile is Cys-280. An NAD(+)-binding site is contributed by Glu-382.

This sequence belongs to the aldehyde dehydrogenase family.

The catalysed reaction is 3-oxopropanoate + NAD(+) + CoA + H2O = hydrogencarbonate + acetyl-CoA + NADH + H(+). In terms of biological role, involved in the degradation of beta-alanine. Likely catalyzes the NAD(+)- and CoA-dependent oxidative decarboxylation of malonate semialdehyde (3-oxopropanoate) to acetyl-CoA. The sequence is that of Malonate-semialdehyde dehydrogenase from Pseudomonas aeruginosa (strain ATCC 15692 / DSM 22644 / CIP 104116 / JCM 14847 / LMG 12228 / 1C / PRS 101 / PAO1).